We begin with the raw amino-acid sequence, 58 residues long: Conotoxin TxXIIIA (58 aa).

Residues 1 to 22 form the signal peptide; sequence MRCLPVFVILLLLIASVPSVDA. A propeptide spanning residues 23-46 is cleaved from the precursor; that stretch reads ELKAKDDMPQASFHDNAERDQQKK.

In terms of assembly, homodimer; disulfide-linked. 5 disulfide bonds are present in each homodimer: two intrachain disulfide bonds per subunit, and one interchain disulfide bond linking the two subunits. In terms of tissue distribution, expressed by the venom duct.

The protein localises to the secreted. The polypeptide is Conotoxin TxXIIIA (Conus textile (Cloth-of-gold cone)).